Here is a 270-residue protein sequence, read N- to C-terminus: Phosphatidylglycerol--prolipoprotein diacylglyceryl transferase (270 aa).

4 helical membrane passes run 19 to 39 (FPVY…LWLA), 53 to 73 (FVDL…AYYV), 92 to 112 (QGGL…IIYA), and 117 to 137 (ISFW…QAIG). A 1,2-diacyl-sn-glycero-3-phospho-(1'-sn-glycerol) is bound at residue R138. 3 helical membrane passes run 178-198 (HPTF…LLLL), 206-226 (GELF…VEEL), and 236-256 (LRIA…FIIV).

This sequence belongs to the Lgt family.

Its subcellular location is the cell membrane. The catalysed reaction is L-cysteinyl-[prolipoprotein] + a 1,2-diacyl-sn-glycero-3-phospho-(1'-sn-glycerol) = an S-1,2-diacyl-sn-glyceryl-L-cysteinyl-[prolipoprotein] + sn-glycerol 1-phosphate + H(+). The protein operates within protein modification; lipoprotein biosynthesis (diacylglyceryl transfer). Its function is as follows. Catalyzes the transfer of the diacylglyceryl group from phosphatidylglycerol to the sulfhydryl group of the N-terminal cysteine of a prolipoprotein, the first step in the formation of mature lipoproteins. The sequence is that of Phosphatidylglycerol--prolipoprotein diacylglyceryl transferase from Bacillus cytotoxicus (strain DSM 22905 / CIP 110041 / 391-98 / NVH 391-98).